The following is a 206-amino-acid chain: Outer-membrane lipoprotein carrier protein (206 aa).

A signal peptide spans 1–21 (MKKLLCAVLLSPLLYSNAVLA).

Belongs to the LolA family. In terms of assembly, monomer.

Its subcellular location is the periplasm. In terms of biological role, participates in the translocation of lipoproteins from the inner membrane to the outer membrane. Only forms a complex with a lipoprotein if the residue after the N-terminal Cys is not an aspartate (The Asp acts as a targeting signal to indicate that the lipoprotein should stay in the inner membrane). This chain is Outer-membrane lipoprotein carrier protein, found in Shewanella sp. (strain MR-4).